The following is a 550-amino-acid chain: Complement control protein (550 aa).

Residues 1–19 (MAFLRQTLWILWTFTMVIG) form the signal peptide. Sushi domains follow at residues 23 to 83 (EKCS…TCNK), 84 to 150 (KSCP…FCEK), 151 to 209 (EKCH…TCEL), and 210 to 268 (AGCK…KCVL). Disulfide bonds link C25/C68, C53/C81, C86/C131, C116/C148, C153/C194, C180/C207, C212/C254, and C240/C266. N-linked (GlcNAc...) asparagine; by host glycans are attached at residues N63 and N111. The N-linked (GlcNAc...) asparagine; by host glycan is linked to N197. N-linked (GlcNAc...) asparagine; by host glycans are attached at residues N255, N275, and N299. Positions 269-338 (EDIDDPNNSN…TSEGFNETTT (70 aa)) are disordered. Polar residues-rich tracts occupy residues 288–302 (EKPN…NYTE) and 312–321 (TAATCDTNCE). Residues N334, N371, N374, and N378 are each glycosylated (N-linked (GlcNAc...) asparagine; by host). Disordered regions lie at residues 387–408 (TPTS…NYNT) and 420–516 (IEEG…RPPA). The segment covering 424–440 (PSNSTTSEKATASTLSH) has biased composition (polar residues). N-linked (GlcNAc...) asparagine; by host glycosylation is found at N426, N445, N455, and N483. The segment covering 450-476 (IYTTLNKTTQLPSTNKPTNSQAKSSTK) has biased composition (polar residues). Polar residues predominate over residues 484–495 (KTTSNPAISLTD). The helical transmembrane segment at 528-548 (IGLLTAVALTCGLITLFHYLF) threads the bilayer.

The protein localises to the host membrane. It localises to the virion membrane. Inhibits the complement component of the host innate immune response. Regulates host C3 convertases, accelerating their decay, and acts as a cofactor for factor I degradation of C4b and C3b. Also binds heparin, and therefore may play two distinct roles when incorporated in virion membranes: immune evasion and host cell binding. The sequence is that of Complement control protein (ORF4) from Human herpesvirus 8 type P (isolate GK18) (HHV-8).